An 876-amino-acid polypeptide reads, in one-letter code: GRB2-associated and regulator of MAPK protein (876 aa).

Residues 12–320 (KDVKWSPVAM…HQVKGDMWPE (309 aa)) form a CABIT region. Position 105 is a phosphotyrosine (Y105). Residues 427–448 (GDSGSDYLFPEANEESAGIPGK) form a disordered region. Y453 bears the Phosphotyrosine mark. 2 disordered regions span residues 460–501 (EGKP…ATLG) and 530–572 (LNAP…SYYS). The tract at residues 498-550 (ATLGATIKSSEIALPPPPVPPKSEAVREECRLLNAPPVPPRSAKPLSTSPSIP) is necessary for interaction with GRB2. The segment covering 560–572 (QTRSPSPTLSYYS) has biased composition (polar residues). A phosphoserine mark is found at S609 and S613. 2 stretches are compositionally biased toward polar residues: residues 630-639 (SGASENQTRS) and 647-657 (RSYSYPRQKTP). Disordered stretches follow at residues 630–664 (SGASENQTRSDFLLDPSRSYSYPRQKTPGTPKRTC) and 722–759 (CPALPPRAPKPVEQKATPETSPLPLKIDGAEEDPTAGS). The SAM domain maps to 811–876 (LSIEEVSKSL…QFINGWRPKI (66 aa)).

This sequence belongs to the GAREM family. In terms of assembly, interacts with EGFR. Interacts (via proline-rich domain and phosphorylated at Tyr-105 and Tyr-453) with GRB2 (via SH3 domains); the interaction occurs upon EGF stimulation. Interacts (phosphorylated at Tyr-453) with PTPN11; the interaction increases MAPK/ERK activity and does not affect the GRB2/SOS complex formation. Post-translationally, on EGF stimulation, phosphorylated on Tyr-105 and Tyr-453.

In terms of biological role, acts as an adapter protein that plays a role in intracellular signaling cascades triggered either by the cell surface activated epidermal growth factor receptor and/or cytoplasmic protein tyrosine kinases. Promotes activation of the MAPK/ERK signaling pathway. Plays a role in the regulation of cell proliferation. This chain is GRB2-associated and regulator of MAPK protein (Garem1), found in Mus musculus (Mouse).